Consider the following 321-residue polypeptide: Beta-ketoacyl-[acyl-carrier-protein] synthase III (321 aa).

Catalysis depends on residues C115 and H248. Residues Q249–R253 form an ACP-binding region. The active site involves N278.

Belongs to the thiolase-like superfamily. FabH family. As to quaternary structure, homodimer.

It is found in the cytoplasm. It catalyses the reaction malonyl-[ACP] + acetyl-CoA + H(+) = 3-oxobutanoyl-[ACP] + CO2 + CoA. The protein operates within lipid metabolism; fatty acid biosynthesis. Catalyzes the condensation reaction of fatty acid synthesis by the addition to an acyl acceptor of two carbons from malonyl-ACP. Catalyzes the first condensation reaction which initiates fatty acid synthesis and may therefore play a role in governing the total rate of fatty acid production. Possesses both acetoacetyl-ACP synthase and acetyl transacylase activities. Its substrate specificity determines the biosynthesis of branched-chain and/or straight-chain of fatty acids. The polypeptide is Beta-ketoacyl-[acyl-carrier-protein] synthase III (Azoarcus sp. (strain BH72)).